The primary structure comprises 182 residues: Ribosome maturation factor RimM (182 aa).

A PRC barrel domain is found at 103–182 (EDDYYWKDLM…RVEVDWDPGF (80 aa)).

The protein belongs to the RimM family. As to quaternary structure, binds ribosomal protein uS19.

It is found in the cytoplasm. Functionally, an accessory protein needed during the final step in the assembly of 30S ribosomal subunit, possibly for assembly of the head region. Essential for efficient processing of 16S rRNA. May be needed both before and after RbfA during the maturation of 16S rRNA. It has affinity for free ribosomal 30S subunits but not for 70S ribosomes. The sequence is that of Ribosome maturation factor RimM from Yersinia pestis bv. Antiqua (strain Antiqua).